The primary structure comprises 404 residues: L-cysteine:1D-myo-inositol 2-amino-2-deoxy-alpha-D-glucopyranoside ligase (404 aa).

Cys35 serves as a coordination point for Zn(2+). L-cysteinyl-5'-AMP-binding positions include 35–38 (CGIT), Thr50, and 73–75 (NVT). The short motif at 37-47 (ITPYDATHLGH) is the 'HIGH' region element. Residues 178 to 183 (ERGGDP) carry the 'ERGGDP' region motif. Trp219 is a binding site for L-cysteinyl-5'-AMP. Cys223 serves as a coordination point for Zn(2+). 241–243 (GND) provides a ligand contact to L-cysteinyl-5'-AMP. A Zn(2+)-binding site is contributed by His248. Residue Ile275 coordinates L-cysteinyl-5'-AMP. Residues 281–285 (KMSKS) carry the 'KMSKS' region motif.

This sequence belongs to the class-I aminoacyl-tRNA synthetase family. MshC subfamily. Monomer. Zn(2+) is required as a cofactor.

It catalyses the reaction 1D-myo-inositol 2-amino-2-deoxy-alpha-D-glucopyranoside + L-cysteine + ATP = 1D-myo-inositol 2-(L-cysteinylamino)-2-deoxy-alpha-D-glucopyranoside + AMP + diphosphate + H(+). Catalyzes the ATP-dependent condensation of GlcN-Ins and L-cysteine to form L-Cys-GlcN-Ins. This is L-cysteine:1D-myo-inositol 2-amino-2-deoxy-alpha-D-glucopyranoside ligase from Salinispora tropica (strain ATCC BAA-916 / DSM 44818 / JCM 13857 / NBRC 105044 / CNB-440).